Reading from the N-terminus, the 113-residue chain is U11-theraphotoxin-Hhn1a (113 aa).

The first 21 residues, 1-21 (MNTVRVTFLLVFVLAVSLGQA), serve as a signal peptide directing secretion. Residues 22-74 (DKDENRMEMQEKTEQGKSYLDFAENLLLQKLEELEAKPLEEDSEESRNSRQKR) constitute a propeptide that is removed on maturation. Residues 57 to 69 (AKPLEEDSEESRN) are compositionally biased toward basic and acidic residues. Residues 57-83 (AKPLEEDSEESRNSRQKRCIGEGVPCD) are disordered. 3 disulfide bridges follow: C75/C90, C82/C95, and C89/C110.

This sequence belongs to the neurotoxin 14 (magi-1) family. 01 (HNTX-16) subfamily. In terms of tissue distribution, expressed by the venom gland.

The protein localises to the secreted. Functionally, probable ion channel inhibitor. This Cyriopagopus hainanus (Chinese bird spider) protein is U11-theraphotoxin-Hhn1a.